The chain runs to 260 residues: Putative protein phosphatase 2C-like protein 44 (260 aa).

Positions 41-259 (YYTVDRLSYA…SSISCVVIRF (219 aa)) constitute a PPM-type phosphatase domain.

The protein belongs to the PP2C family.

The protein is Putative protein phosphatase 2C-like protein 44 of Arabidopsis thaliana (Mouse-ear cress).